A 125-amino-acid chain; its full sequence is Prepro-urotensin II-alpha (125 aa).

The signal sequence occupies residues 1–21 (MMCNLLLSFSVLLLSCTHLVA). Residues 109 to 111 (QFR) constitute a propeptide that is removed on maturation. Cysteine 119 and cysteine 124 are joined by a disulfide.

The protein belongs to the urotensin-2 family.

Its subcellular location is the secreted. Functionally, urotensin is found in the teleost caudal neurosecretory system. It has a suggested role in osmoregulation and as a corticotropin-releasing factor. The non-hormonal portion of this precursor may be a urotensin binding protein, urophysin. This chain is Prepro-urotensin II-alpha, found in Cyprinus carpio (Common carp).